A 349-amino-acid chain; its full sequence is Replication-associated protein (349 aa).

The region spanning Gln-9 to Phe-117 is the CRESS-DNA virus Rep endonuclease domain. Residues Phe-16–Tyr-19 carry the RCR-1 motif. Residues Glu-50, His-58, and His-60 each coordinate a divalent metal cation. Positions His-58–His-60 match the RCR-2 motif. Tyr-104 functions as the For DNA cleavage activity in the catalytic mechanism. Residues Tyr-104 to Lys-107 carry the RCR-3 motif. Asp-108 lines the a divalent metal cation pocket. The segment at Lys-144–Lys-154 is binding to RBR1. The interval Lys-157 to Ala-177 is oligomerization. ATP is bound at residue Gly-223 to Thr-230.

Belongs to the geminiviridae Rep protein family. As to quaternary structure, homooligomer. Interacts with the replication enhancer protein (REn). Interacts with host retinoblastoma-related protein 1 (RBR1), and may thereby induce the transcription of host replicative enzymes even if the cell is not dividing anymore. Interacts with host PCNA. Interacts with host SCE1 protein. The cofactor is Mg(2+). Mn(2+) serves as cofactor.

It is found in the host nucleus. Essential for the replication of viral ssDNA. The closed circular ssDNA genome is first converted to a superhelical dsDNA. Rep binds a specific region at the genome origin of replication. It introduces an endonucleolytic nick within the conserved sequence 5'-TAATATTAC-3' in the intergenic region of the genome present in all geminiviruses, thereby initiating the rolling circle replication (RCR). Following cleavage, binds covalently to the 5'-phosphate of DNA as a tyrosyl ester. The cleavage gives rise to a free 3'-OH that serves as a primer for the cellular DNA polymerase. The polymerase synthesizes the (+) strand DNA by rolling circle mechanism. After one round of replication, a Rep-catalyzed nucleotidyl transfer reaction releases a circular single-stranded virus genome, thereby terminating the replication. Displays origin-specific DNA cleavage, nucleotidyl transferase, ATPase and helicase activities. This is Replication-associated protein from Solanum lycopersicum (Tomato).